A 903-amino-acid chain; its full sequence is Translation initiation factor IF-2 (903 aa).

Positions 66-296 are disordered; that stretch reads QATLKGEGPV…GRSRKREMEN (231 aa). The span at 121–132 shows a compositional bias: basic and acidic residues; it reads NTDETRVQEHKP. Low complexity-rich tracts occupy residues 139–152 and 178–195; these read AGDA…AAAG and AATG…GQQS. A compositionally biased stretch (basic and acidic residues) spans 204-231; sequence EGRSRQDENKGSAREDQANRFATRDKEA. Over residues 246-255 the composition is skewed to basic residues; that stretch reads RRPAHSKPLR. Composition is skewed to basic and acidic residues over residues 263–276 and 285–296; these read VTKD…DRSN and ESGRSRKREMEN. Residues 403-572 enclose the tr-type G domain; it reads ERPPVVTVMG…LLTADVAELK (170 aa). Residues 412–419 form a G1 region; the sequence is GHVDHGKT. Position 412-419 (412-419) interacts with GTP; sequence GHVDHGKT. The G2 stretch occupies residues 437–441; that stretch reads GITQH. The G3 stretch occupies residues 458 to 461; it reads DTPG. GTP-binding positions include 458–462 and 512–515; these read DTPGH and NKID. Positions 512–515 are G4; it reads NKID. A G5 region spans residues 548–550; the sequence is SAV.

It belongs to the TRAFAC class translation factor GTPase superfamily. Classic translation factor GTPase family. IF-2 subfamily.

The protein localises to the cytoplasm. One of the essential components for the initiation of protein synthesis. Protects formylmethionyl-tRNA from spontaneous hydrolysis and promotes its binding to the 30S ribosomal subunits. Also involved in the hydrolysis of GTP during the formation of the 70S ribosomal complex. The polypeptide is Translation initiation factor IF-2 (Moorella thermoacetica (strain ATCC 39073 / JCM 9320)).